We begin with the raw amino-acid sequence, 553 residues long: Serine/threonine-protein phosphatase 2B catalytic subunit A1 (553 aa).

S2 bears the N-acetylserine mark. D119, H121, and D147 together coordinate Fe cation. 2 residues coordinate Zn(2+): D147 and N179. The active-site Proton donor is H180. Zn(2+) contacts are provided by H228 and H317. A disordered region spans residues 413 to 447 (LDPESEPKAAEETVKARANATKETGTPSDEKASSA). Residues 417 to 427 (SEPKAAEETVK) show a composition bias toward basic and acidic residues.

The protein belongs to the PPP phosphatase family. PP-2B subfamily. Composed of two components (A and B), the A component is the catalytic subunit and the B component confers calcium sensitivity. Requires Fe(3+) as cofactor. Zn(2+) serves as cofactor.

The catalysed reaction is O-phospho-L-seryl-[protein] + H2O = L-seryl-[protein] + phosphate. The enzyme catalyses O-phospho-L-threonyl-[protein] + H2O = L-threonyl-[protein] + phosphate. Its function is as follows. Calcium-dependent, calmodulin-stimulated protein phosphatase. This subunit may have a role in the calmodulin activation of calcineurin. This chain is Serine/threonine-protein phosphatase 2B catalytic subunit A1 (CNA1), found in Saccharomyces cerevisiae (strain ATCC 204508 / S288c) (Baker's yeast).